The chain runs to 343 residues: L-threonine 3-dehydrogenase (343 aa).

Cys38 contacts Zn(2+). Residues Thr40 and His43 each act as charge relay system in the active site. Positions 63, 64, 93, 96, 99, and 107 each coordinate Zn(2+). NAD(+)-binding positions include Ile175, Asp195, Arg200, 262–264 (LGI), and 286–287 (IY).

The protein belongs to the zinc-containing alcohol dehydrogenase family. Homotetramer. The cofactor is Zn(2+).

It is found in the cytoplasm. It carries out the reaction L-threonine + NAD(+) = (2S)-2-amino-3-oxobutanoate + NADH + H(+). Its pathway is amino-acid degradation; L-threonine degradation via oxydo-reductase pathway; glycine from L-threonine: step 1/2. Its function is as follows. Catalyzes the NAD(+)-dependent oxidation of L-threonine to 2-amino-3-ketobutyrate. This Paraburkholderia phytofirmans (strain DSM 17436 / LMG 22146 / PsJN) (Burkholderia phytofirmans) protein is L-threonine 3-dehydrogenase.